Reading from the N-terminus, the 276-residue chain is 1-(5-phosphoribosyl)-5-[(5-phosphoribosylamino)methylideneamino] imidazole-4-carboxamide isomerase (276 aa).

It belongs to the HisA/HisF family.

The protein localises to the cytoplasm. It carries out the reaction 1-(5-phospho-beta-D-ribosyl)-5-[(5-phospho-beta-D-ribosylamino)methylideneamino]imidazole-4-carboxamide = 5-[(5-phospho-1-deoxy-D-ribulos-1-ylimino)methylamino]-1-(5-phospho-beta-D-ribosyl)imidazole-4-carboxamide. Its pathway is amino-acid biosynthesis; L-histidine biosynthesis; L-histidine from 5-phospho-alpha-D-ribose 1-diphosphate: step 4/9. In Debaryomyces hansenii (strain ATCC 36239 / CBS 767 / BCRC 21394 / JCM 1990 / NBRC 0083 / IGC 2968) (Yeast), this protein is 1-(5-phosphoribosyl)-5-[(5-phosphoribosylamino)methylideneamino] imidazole-4-carboxamide isomerase (HIS6).